A 202-amino-acid polypeptide reads, in one-letter code: ATP-dependent Clp protease proteolytic subunit (202 aa).

Catalysis depends on Ser-98, which acts as the Nucleophile. Residue His-123 is part of the active site.

It belongs to the peptidase S14 family. In terms of assembly, fourteen ClpP subunits assemble into 2 heptameric rings which stack back to back to give a disk-like structure with a central cavity, resembling the structure of eukaryotic proteasomes.

It localises to the cytoplasm. The catalysed reaction is Hydrolysis of proteins to small peptides in the presence of ATP and magnesium. alpha-casein is the usual test substrate. In the absence of ATP, only oligopeptides shorter than five residues are hydrolyzed (such as succinyl-Leu-Tyr-|-NHMec, and Leu-Tyr-Leu-|-Tyr-Trp, in which cleavage of the -Tyr-|-Leu- and -Tyr-|-Trp bonds also occurs).. Its function is as follows. Cleaves peptides in various proteins in a process that requires ATP hydrolysis. Has a chymotrypsin-like activity. Plays a major role in the degradation of misfolded proteins. In Syntrophobacter fumaroxidans (strain DSM 10017 / MPOB), this protein is ATP-dependent Clp protease proteolytic subunit.